A 220-amino-acid polypeptide reads, in one-letter code: Translin-1 (220 aa).

This sequence belongs to the translin family. In terms of assembly, forms an octameric ring-shaped structure, which is capable of binding DNA or RNA.

The protein localises to the cytoplasm. It is found in the nucleus. DNA-binding protein that specifically recognizes consensus sequences at the breakpoint junctions in chromosomal translocations. Selectively binds single-stranded d(GT)n and d(GTT)n microsatellite repeats. Has much higher affinities for the homologous RNA sequences (GU)n and (GUU)n. Does not bind double-stranded DNA. Has a role in meiosis. The chain is Translin-1 (tsn1) from Schizosaccharomyces pombe (strain 972 / ATCC 24843) (Fission yeast).